We begin with the raw amino-acid sequence, 454 residues long: Type II methyltransferase M.MvaI (454 aa).

It belongs to the N(4)/N(6)-methyltransferase family. N(4) subfamily.

The catalysed reaction is a 2'-deoxycytidine in DNA + S-adenosyl-L-methionine = an N(4)-methyl-2'-deoxycytidine in DNA + S-adenosyl-L-homocysteine + H(+). Its function is as follows. An alpha subtype methylase, recognizes the double-stranded sequence 5'-CCWGG-3', methylatES C-2 on both strands, and protects the DNA from cleavage by the MvaI endonuclease. The polypeptide is Type II methyltransferase M.MvaI (Kocuria varians (Micrococcus varians)).